Reading from the N-terminus, the 744-residue chain is Collagen alpha-1(VIII) chain (744 aa).

The N-terminal stretch at 1-27 (MAVLPGPLQLLGVLLTISLSSIRLIQA) is a signal peptide. The segment at 29-117 (AYYGIKPLPP…GKEIPLASLR (89 aa)) is nonhelical region (NC2). Disordered regions lie at residues 115–393 (SLRG…GEPG) and 459–589 (GPKG…PDMG). The interval 118 to 571 (GEQGPRGEPG…PGPPGPPGPP (454 aa)) is triple-helical region (COL1). Residues 128 to 137 (PRGPPGPPGL) show a composition bias toward pro residues. Low complexity predominate over residues 168-178 (KPGAMGMPGAK). 2 stretches are compositionally biased toward gly residues: residues 203 to 217 (GLPGIGKPGGPGLPG) and 328 to 337 (GFPGGKGEQG). Low complexity-rich tracts occupy residues 466–496 (QKGVPGLPGVPGLLGPKGEPGIPGDQGLQGP) and 538–556 (AGLHGPPGKPGALGPQGQP). Residues 558–581 (LPGPPGPPGPPGPPAVMPPTPPPQ) are compositionally biased toward pro residues. Positions 572–744 (AVMPPTPPPQ…SFSGYLLYPM (173 aa)) are nonhelical region (NC1). The 134-residue stretch at 611 to 744 (PAYEMPAFTA…SFSGYLLYPM (134 aa)) folds into the C1q domain.

As to quaternary structure, homotrimers, or heterotrimers in association with alpha 2(VIII) type collagens. Four homotrimers can form a tetrahedron stabilized by central interacting C-terminal NC1 trimers. In terms of processing, prolines at the third position of the tripeptide repeating unit (G-X-Y) are hydroxylated in some or all of the chains. Proteolytically cleaved by neutrophil elastase, in vitro. Proteolytic processing produces the C-terminal NC1 domain fragment, vastatin. As to expression, expressed primarily in the subendothelium of large blood vessels. Also expressed in arterioles and venules in muscle, heart, kidney, spleen, umbilical cord, liver and lung and is also found in connective tissue layers around hair follicles, around nerve bundles in muscle, in the dura of the optic nerve, in cornea and sclera, and in the perichondrium of cartilaginous tissues. In the kidney, expressed in mesangial cells, glomerular endothelial cells, and tubular epithelial cells. Also expressed in mast cells, and in astrocytes during the repair process. Expressed in Descemet's membrane. Specifically expressed in peritoneal fibroblasts and mesothelial cells.

The protein localises to the secreted. The protein resides in the extracellular space. It is found in the extracellular matrix. It localises to the basement membrane. Macromolecular component of the subendothelium. Major component of the Descemet's membrane (basement membrane) of corneal endothelial cells. Also a component of the endothelia of blood vessels. Necessary for migration and proliferation of vascular smooth muscle cells and thus, has a potential role in the maintenance of vessel wall integrity and structure, in particular in atherogenesis. Its function is as follows. Vastatin, the C-terminal fragment comprising the NC1 domain, inhibits aortic endothelial cell proliferation and causes cell apoptosis. The sequence is that of Collagen alpha-1(VIII) chain (COL8A1) from Homo sapiens (Human).